We begin with the raw amino-acid sequence, 427 residues long: Beta-porphyranase D (427 aa).

The N-terminal stretch at 1–19 is a signal peptide; sequence MILKQAILTLVLVNANLFA. Residues 23 to 45 are disordered; that stretch reads PKTYSSTDKETRQGPPKPPMGKR. The 277-residue stretch at 32-308 folds into the GH16 domain; that stretch reads ETRQGPPKPP…WVRAYRLVDV (277 aa). 5 residues coordinate substrate: Trp-73, Arg-76, Glu-168, Glu-173, and Glu-272. The active-site Nucleophile is Glu-168. Glu-173 serves as the catalytic Proton donor.

Belongs to the glycosyl hydrolase 16 family.

The protein resides in the periplasm. The catalysed reaction is Hydrolysis of beta-D-galactopyranose-(1-&gt;4)-alpha-L-galactopyranose-6-sulfate linkages in porphyran.. Functionally, cleaves the sulfated polysaccharide porphyran at the (1-&gt;4) linkages between beta-D-galactopyranose and alpha-L-galactopyranose-6-sulfate, forming mostly the disaccharide alpha-L-galactopyranose-6-sulfate-(1-&gt;3)-beta-D-galactose. The chain is Beta-porphyranase D (porD) from Zobellia galactanivorans (strain DSM 12802 / CCUG 47099 / CIP 106680 / NCIMB 13871 / Dsij).